The sequence spans 316 residues: tRNA dimethylallyltransferase (316 aa).

14-21 lines the ATP pocket; sequence GPTAVGKT. 16-21 contributes to the substrate binding site; sequence TAVGKT. Positions 39 to 42 are interaction with substrate tRNA; that stretch reads DSMQ.

The protein belongs to the IPP transferase family. As to quaternary structure, monomer. Mg(2+) is required as a cofactor.

It catalyses the reaction adenosine(37) in tRNA + dimethylallyl diphosphate = N(6)-dimethylallyladenosine(37) in tRNA + diphosphate. In terms of biological role, catalyzes the transfer of a dimethylallyl group onto the adenine at position 37 in tRNAs that read codons beginning with uridine, leading to the formation of N6-(dimethylallyl)adenosine (i(6)A). This chain is tRNA dimethylallyltransferase, found in Bacillus cytotoxicus (strain DSM 22905 / CIP 110041 / 391-98 / NVH 391-98).